We begin with the raw amino-acid sequence, 365 residues long: MAPTTITALAKEKTLNLDFVRDEDERPKVAYNQFSNEIPIISLAGLDDDSDGRRPEICRKIVKACEDWGIFQVVDHGIDSGLISEMTRLSREFFALPAEEKLEYDTTGGKRGGFTISTVLQGDDAMDWREFVTYFSYPINARDYSRWPKKPEGWRSTTEVYSEKLMVLGAKLLEVLSEAMGLEKGDLTKACVDMEQKVLINYYPTCPQPDLTLGVRRHTDPGTITILLQDMVGGLQATRDGGKTWITVQPVEGAFVVNLGDHGHYLSNGRFRNADHQAVVNSTSSRLSIATFQNPAQNAIVYPLKIREGEKAILDEAITYAEMYKKCMTKHIEVATRKKLAKEKRLQDEKAKLEMKSKSADENLA.

Fe cation is bound by residues His-76, His-218, Asp-220, and His-276. Positions 194–295 (MEQKVLINYY…RLSIATFQNP (102 aa)) constitute a Fe2OG dioxygenase domain. The segment at 345-365 (RLQDEKAKLEMKSKSADENLA) is disordered.

This sequence belongs to the iron/ascorbate-dependent oxidoreductase family. Fe cation serves as cofactor. The cofactor is L-ascorbate.

The protein localises to the cytoplasm. The enzyme catalyses a flavanone + 2-oxoglutarate + O2 = a flavone + succinate + CO2 + H2O. It functions in the pathway secondary metabolite biosynthesis; flavonoid biosynthesis. Involved in the conversion of naringenin to apigenin. Acts via a direct 2,3-desaturation of flavanones instead of a sequential hydroxylation/dehydratation mechanism. In Petroselinum crispum (Parsley), this protein is Flavone synthase (FNSI).